Consider the following 864-residue polypeptide: Valine--tRNA ligase (864 aa).

Residues 42–52 (PTISGKLHIGH) carry the 'HIGH' region motif. The 'KMSKS' region signature appears at 589 to 593 (KMSKS). Residue K592 coordinates ATP.

It belongs to the class-I aminoacyl-tRNA synthetase family. ValS type 2 subfamily. Monomer.

The protein resides in the cytoplasm. The catalysed reaction is tRNA(Val) + L-valine + ATP = L-valyl-tRNA(Val) + AMP + diphosphate. Functionally, catalyzes the attachment of valine to tRNA(Val). As ValRS can inadvertently accommodate and process structurally similar amino acids such as threonine, to avoid such errors, it has a 'posttransfer' editing activity that hydrolyzes mischarged Thr-tRNA(Val) in a tRNA-dependent manner. This is Valine--tRNA ligase from Wolbachia pipientis wMel.